The primary structure comprises 216 residues: Uracil phosphoribosyltransferase (216 aa).

5-phospho-alpha-D-ribose 1-diphosphate contacts are provided by residues R85, R110, and 135-143 (DPMVATGYS). Uracil-binding positions include I200 and 205-207 (GDA). D206 lines the 5-phospho-alpha-D-ribose 1-diphosphate pocket.

This sequence belongs to the UPRTase family. Requires Mg(2+) as cofactor.

The catalysed reaction is UMP + diphosphate = 5-phospho-alpha-D-ribose 1-diphosphate + uracil. The protein operates within pyrimidine metabolism; UMP biosynthesis via salvage pathway; UMP from uracil: step 1/1. Allosterically activated by GTP. In terms of biological role, catalyzes the conversion of uracil and 5-phospho-alpha-D-ribose 1-diphosphate (PRPP) to UMP and diphosphate. The sequence is that of Uracil phosphoribosyltransferase from Paraburkholderia phymatum (strain DSM 17167 / CIP 108236 / LMG 21445 / STM815) (Burkholderia phymatum).